We begin with the raw amino-acid sequence, 944 residues long: E3 ubiquitin-protein ligase HACE1 (944 aa).

7 ANK repeats span residues L23 to F55, V64 to Y93, S97 to I126, E130 to V159, M163 to R192, S196 to D226, and N228 to P253. Positions N609–A944 constitute an HECT domain. C911 functions as the Glycyl thioester intermediate in the catalytic mechanism.

It is found in the golgi apparatus. The protein resides in the golgi stack membrane. It localises to the cytoplasm. Its subcellular location is the endoplasmic reticulum. The catalysed reaction is S-ubiquitinyl-[E2 ubiquitin-conjugating enzyme]-L-cysteine + [acceptor protein]-L-lysine = [E2 ubiquitin-conjugating enzyme]-L-cysteine + N(6)-ubiquitinyl-[acceptor protein]-L-lysine.. It participates in protein modification; protein ubiquitination. E3 ubiquitin-protein ligase involved in Golgi membrane fusion and regulation of small GTPases. Acts as a regulator of Golgi membrane dynamics during the cell cycle: recruited to Golgi membrane by Rab proteins and regulates postmitotic Golgi membrane fusion. Acts by mediating ubiquitination during mitotic Golgi disassembly, ubiquitination serving as a signal for Golgi reassembly later, after cell division. The sequence is that of E3 ubiquitin-protein ligase HACE1 (hace1) from Xenopus laevis (African clawed frog).